Reading from the N-terminus, the 207-residue chain is MTDRLLVLVRHGQSEWNLKNLFTGWKDPGLTEKGVAEAIEAGKKLKAQGLVFDVAFTSVLTRAQTTLDLMLNELGQTGLPTSKNLALNERDYGDLSGLNKDDARKKWGEEQVHVWRRSYDVPPPGGESLKDTLARALPYYVQEILPCVLRGERTLVAAHGNSLRALIMVLEKLTPESILKRELGTGAPVIYRLNADSTVASKLDLAE.

Residues 10–17 (RHGQSEWN), 23–24 (TG), arginine 62, 89–92 (ERDY), lysine 100, 116–117 (RR), and 160–161 (GN) contribute to the substrate site. Histidine 11 functions as the Tele-phosphohistidine intermediate in the catalytic mechanism. The active-site Proton donor/acceptor is the glutamate 89.

This sequence belongs to the phosphoglycerate mutase family. BPG-dependent PGAM subfamily. As to quaternary structure, homodimer.

The enzyme catalyses (2R)-2-phosphoglycerate = (2R)-3-phosphoglycerate. The protein operates within carbohydrate degradation; glycolysis; pyruvate from D-glyceraldehyde 3-phosphate: step 3/5. Catalyzes the interconversion of 2-phosphoglycerate and 3-phosphoglycerate. In Rhodopseudomonas palustris (strain BisB18), this protein is 2,3-bisphosphoglycerate-dependent phosphoglycerate mutase.